The sequence spans 578 residues: MKASRFFIGTLKEAPADAEIVSHKLMVRAGMIRRVAGGIYNYLPIGLRSIRKVEAIVREEMNRAGAVELLMPAVQPAELWQESGRWEQYGPELLRFKDRKDNDFVIGPTHEEVVTDIARNQIKSYRQMPVNFYQIQTKFRDEIRPRFGVMRGREFIMKDAYSFDKDAEGLRESYRKMYDAYVRIFTRLGLEFRAVAADSGSIGGNFSHEFHVIADTGEDAIAYCPSSEFAANVEAAEALPLIAERAAPAEALTKVATPGKAKCEAVAELLNIPLERTIKSIVLATDNEGAEPTIWLVMLRGDHDLNEIKVSKLPGLKNHRFATEQEIVEWFGTPPGYLGPIGTKKPVKVIADRTVANMSDFVVGANEVDYHIAGVNWGRDLPEPEVADVRNVKKGDPSPDGKGAIDICRGIEVGHVFQLGTKYSEAMGATFLDESGKPQPMLMGCYGIGVTRILGAAIEQNFDDKGIIWPESIAPFEVVLCPMGYDRSDAVREAADKLYAELTAAGIDVILDDRGERPGVMFADWELIGVPHRLVIGERGLKDGKIEYQGRRDTEATLLPAGEAAATVAEKVRAALAH.

This sequence belongs to the class-II aminoacyl-tRNA synthetase family. ProS type 1 subfamily. Homodimer.

The protein resides in the cytoplasm. It carries out the reaction tRNA(Pro) + L-proline + ATP = L-prolyl-tRNA(Pro) + AMP + diphosphate. Catalyzes the attachment of proline to tRNA(Pro) in a two-step reaction: proline is first activated by ATP to form Pro-AMP and then transferred to the acceptor end of tRNA(Pro). As ProRS can inadvertently accommodate and process non-cognate amino acids such as alanine and cysteine, to avoid such errors it has two additional distinct editing activities against alanine. One activity is designated as 'pretransfer' editing and involves the tRNA(Pro)-independent hydrolysis of activated Ala-AMP. The other activity is designated 'posttransfer' editing and involves deacylation of mischarged Ala-tRNA(Pro). The misacylated Cys-tRNA(Pro) is not edited by ProRS. This Burkholderia multivorans (strain ATCC 17616 / 249) protein is Proline--tRNA ligase.